The chain runs to 248 residues: Granzyme E (248 aa).

The N-terminal stretch at 1–18 (MPPVLILLTLLLPLGAGA) is a signal peptide. The propeptide occupies 19–20 (EE). The 226-residue stretch at 21–246 (IIGGHVVKPH…FLPWISRNMK (226 aa)) folds into the Peptidase S1 domain. C50 and C66 form a disulfide bridge. H65 serves as the catalytic Charge relay system. N68 and N102 each carry an N-linked (GlcNAc...) asparagine glycan. The active-site Charge relay system is the D109. 2 disulfide bridges follow: C143–C210 and C175–C189. An N-linked (GlcNAc...) asparagine glycan is attached at N154. S204 acts as the Charge relay system in catalysis. N223 is a glycosylation site (N-linked (GlcNAc...) asparagine).

The protein belongs to the peptidase S1 family. Granzyme subfamily.

The protein localises to the cytolytic granule. This enzyme is probably necessary for target cell lysis in cell-mediated immune responses. In Mus musculus (Mouse), this protein is Granzyme E (Gzme).